The chain runs to 303 residues: uncharacterized protein (303 aa).

6 helical membrane passes run 12–32 (GLPIGSPMYAHLLAGAFSGIL), 81–101 (ISSVIMGAGPSHAIYFSVLEF), 117–137 (ALAGACAITISDAFMTPFDVI), 174–194 (CIAMSIPFTAIQVATYDTCMS), 208–228 (IISGGLSGAIASSLTTPLDVV), and 265–286 (FFKGIRPRMVVAMPATAVSWAA). Solcar repeat units follow at residues 17 to 105 (SPMY…FKSK), 111 to 195 (DRPL…CMSF), and 206 to 293 (SHII…GKEI).

Belongs to the mitochondrial carrier (TC 2.A.29) family.

Its subcellular location is the mitochondrion inner membrane. This is an uncharacterized protein from Schizosaccharomyces pombe (strain 972 / ATCC 24843) (Fission yeast).